Here is a 622-residue protein sequence, read N- to C-terminus: MEDRQSRLFLALILSMGIWMGVNYFFFPPTPKKTSETKEVKVDKPSDDKQDQIQKEKKESRTTIPSKGTKIIPSESKKTLVVTESYIVEFSSLGGRISKFYVKDFTGPNGELVQVARKDPETLIVDGKTYYGVELSREKGFDFNFTDSLNELPHSEWNRIPFSLAENKADHSVVFSAFSPDKTYQLKKTFRFFDRENYFKVTVSVINLTKEKLSFASQKNVQYLRTFGSLGPFPKDRPLNDRDTANFFRFYHLDGSFNDTLDGSSSVGFWSSIVNFFTGNSGVDESFSLKTSTGGVDFAGTGSRYFIAVADPLDHKPQGIILDNRPKNESGAVLVYNNITLGPGEVYNLDFASYVGIRESIGMVFHDPELDPSQTKNSPFAGLSSDLNKSFNQGITTPFRNGIIWVLKQIYRFTIPNYGWSIIIFAILFKLVFYPLNQKQAESMKKMQELSPQLKTINEKFANDPKMRQQKTMELYKKNNVNPVGGCLPMVIQIPIFIALYTAFSDTIDLWNSPFLWVKDLSEPDVIWTSPAIPYFTQTGIGLNLLALLMVGTQIFQTRMTSVSMDPNQKMLMYVMPVMMLYIFWNMPSGVTLYWTFQNVLSIGQQWVTNHLKKTEAKKKAV.

The chain crosses the membrane as a helical span at residues 8–28; that stretch reads LFLALILSMGIWMGVNYFFFP. Over residues 33–61 the composition is skewed to basic and acidic residues; that stretch reads KTSETKEVKVDKPSDDKQDQIQKEKKESR. The disordered stretch occupies residues 33-70; it reads KTSETKEVKVDKPSDDKQDQIQKEKKESRTTIPSKGTK. A run of 4 helical transmembrane segments spans residues 413 to 433, 484 to 504, 532 to 552, and 571 to 591; these read FTIP…KLVF, VGGC…YTAF, AIPY…LMVG, and MLMY…PSGV.

The protein belongs to the OXA1/ALB3/YidC family. Type 1 subfamily. As to quaternary structure, interacts with the Sec translocase complex via SecD. Specifically interacts with transmembrane segments of nascent integral membrane proteins during membrane integration.

The protein resides in the cell inner membrane. Required for the insertion and/or proper folding and/or complex formation of integral membrane proteins into the membrane. Involved in integration of membrane proteins that insert both dependently and independently of the Sec translocase complex, as well as at least some lipoproteins. Aids folding of multispanning membrane proteins. The chain is Membrane protein insertase YidC from Leptospira borgpetersenii serovar Hardjo-bovis (strain JB197).